A 238-amino-acid chain; its full sequence is 1-(5-phosphoribosyl)-5-[(5-phosphoribosylamino)methylideneamino] imidazole-4-carboxamide isomerase (238 aa).

The Proton acceptor role is filled by D8. The active-site Proton donor is D130.

The protein belongs to the HisA/HisF family.

It is found in the cytoplasm. The catalysed reaction is 1-(5-phospho-beta-D-ribosyl)-5-[(5-phospho-beta-D-ribosylamino)methylideneamino]imidazole-4-carboxamide = 5-[(5-phospho-1-deoxy-D-ribulos-1-ylimino)methylamino]-1-(5-phospho-beta-D-ribosyl)imidazole-4-carboxamide. It functions in the pathway amino-acid biosynthesis; L-histidine biosynthesis; L-histidine from 5-phospho-alpha-D-ribose 1-diphosphate: step 4/9. The protein is 1-(5-phosphoribosyl)-5-[(5-phosphoribosylamino)methylideneamino] imidazole-4-carboxamide isomerase of Methanococcus maripaludis (strain C6 / ATCC BAA-1332).